The following is a 393-amino-acid chain: Putative serpin-Z6A (393 aa).

The tract at residues 336–360 is RCL; sequence GTEAAAATAVLMEGAARYAPPPPPR.

The protein belongs to the serpin family.

Functionally, probable serine protease inhibitor. In Oryza sativa subsp. japonica (Rice), this protein is Putative serpin-Z6A.